A 203-amino-acid polypeptide reads, in one-letter code: tRNA (pseudouridine(54)-N(1))-methyltransferase (203 aa).

Residues leucine 135 and glycine 156 each contribute to the S-adenosyl-L-methionine site.

Belongs to the methyltransferase superfamily. TrmY family. In terms of assembly, homodimer.

It localises to the cytoplasm. It catalyses the reaction pseudouridine(54) in tRNA + S-adenosyl-L-methionine = N(1)-methylpseudouridine(54) in tRNA + S-adenosyl-L-homocysteine + H(+). Specifically catalyzes the N1-methylation of pseudouridine at position 54 (Psi54) in tRNAs. In Thermococcus onnurineus (strain NA1), this protein is tRNA (pseudouridine(54)-N(1))-methyltransferase.